The primary structure comprises 278 residues: Shikimate dehydrogenase (NADP(+)) (278 aa).

Shikimate is bound by residues 19–21 (SRS) and Thr66. Lys70 functions as the Proton acceptor in the catalytic mechanism. 2 residues coordinate shikimate: Asn91 and Asp106. NADP(+) is bound by residues 129 to 133 (GAGGA) and Phe221. A shikimate-binding site is contributed by Tyr223. Gly242 serves as a coordination point for NADP(+).

This sequence belongs to the shikimate dehydrogenase family. As to quaternary structure, homodimer.

The enzyme catalyses shikimate + NADP(+) = 3-dehydroshikimate + NADPH + H(+). It participates in metabolic intermediate biosynthesis; chorismate biosynthesis; chorismate from D-erythrose 4-phosphate and phosphoenolpyruvate: step 4/7. Its function is as follows. Involved in the biosynthesis of the chorismate, which leads to the biosynthesis of aromatic amino acids. Catalyzes the reversible NADPH linked reduction of 3-dehydroshikimate (DHSA) to yield shikimate (SA). This Anaeromyxobacter dehalogenans (strain 2CP-C) protein is Shikimate dehydrogenase (NADP(+)).